The primary structure comprises 116 residues: Ig heavy chain V region 441 (116 aa).

Positions 1–18 are cleaved as a signal peptide; sequence MDFGLIFFIVALLKGVQC. Residues 19 to 116 form the Ig-like domain; the sequence is EVKLLESGGG…EDTALYYCAR (98 aa).

This is Ig heavy chain V region 441 from Mus musculus (Mouse).